The sequence spans 294 residues: Tryptophan 2,3-dioxygenase 1 (294 aa).

Positions 1–20 are disordered; that stretch reads MSEPIQPTRPAASGCPMHGA. Substrate is bound by residues 63-67, Tyr125, and Arg129; that span reads FIVQH. Residue His252 coordinates heme. A substrate-binding site is contributed by Thr266.

It belongs to the tryptophan 2,3-dioxygenase family. In terms of assembly, homotetramer. Heme is required as a cofactor.

The catalysed reaction is L-tryptophan + O2 = N-formyl-L-kynurenine. Its pathway is amino-acid degradation; L-tryptophan degradation via kynurenine pathway; L-kynurenine from L-tryptophan: step 1/2. In terms of biological role, heme-dependent dioxygenase that catalyzes the oxidative cleavage of the L-tryptophan (L-Trp) pyrrole ring and converts L-tryptophan to N-formyl-L-kynurenine. Catalyzes the oxidative cleavage of the indole moiety. The protein is Tryptophan 2,3-dioxygenase 1 of Ralstonia nicotianae (strain ATCC BAA-1114 / GMI1000) (Ralstonia solanacearum).